The primary structure comprises 511 residues: Sterol 14-alpha demethylase resB (511 aa).

The helical transmembrane segment at 3-23 (ILWIVAYALLAFAASIALNLV) threads the bilayer. C451 contacts heme.

It belongs to the cytochrome P450 family. It depends on heme as a cofactor.

It is found in the membrane. The enzyme catalyses a 14alpha-methyl steroid + 3 reduced [NADPH--hemoprotein reductase] + 3 O2 = a Delta(14) steroid + formate + 3 oxidized [NADPH--hemoprotein reductase] + 4 H2O + 4 H(+). It carries out the reaction a 14alpha-methyl steroid + reduced [NADPH--hemoprotein reductase] + O2 = a 14alpha-hydroxymethyl steroid + oxidized [NADPH--hemoprotein reductase] + H2O + H(+). The catalysed reaction is a 14alpha-hydroxymethyl steroid + reduced [NADPH--hemoprotein reductase] + O2 = a 14alpha-formyl steroid + oxidized [NADPH--hemoprotein reductase] + 2 H2O + H(+). It catalyses the reaction a 14alpha-formyl steroid + reduced [NADPH--hemoprotein reductase] + O2 = a Delta(14) steroid + formate + oxidized [NADPH--hemoprotein reductase] + H2O + 2 H(+). The enzyme catalyses lanosterol + 3 reduced [NADPH--hemoprotein reductase] + 3 O2 = 4,4-dimethyl-5alpha-cholesta-8,14,24-trien-3beta-ol + formate + 3 oxidized [NADPH--hemoprotein reductase] + 4 H2O + 4 H(+). It carries out the reaction lanosterol + reduced [NADPH--hemoprotein reductase] + O2 = 32-hydroxylanosterol + oxidized [NADPH--hemoprotein reductase] + H2O + H(+). The catalysed reaction is 32-hydroxylanosterol + reduced [NADPH--hemoprotein reductase] + O2 = 32-oxolanosterol + oxidized [NADPH--hemoprotein reductase] + 2 H2O + H(+). It catalyses the reaction 32-oxolanosterol + reduced [NADPH--hemoprotein reductase] + O2 = 4,4-dimethyl-5alpha-cholesta-8,14,24-trien-3beta-ol + formate + oxidized [NADPH--hemoprotein reductase] + H2O + 2 H(+). The enzyme catalyses eburicol + 3 reduced [NADPH--hemoprotein reductase] + 3 O2 = 14-demethyleburicol + formate + 3 oxidized [NADPH--hemoprotein reductase] + 4 H2O + 4 H(+). It carries out the reaction eburicol + reduced [NADPH--hemoprotein reductase] + O2 = 32-hydroxyeburicol + oxidized [NADPH--hemoprotein reductase] + H2O + H(+). The catalysed reaction is 32-hydroxyeburicol + reduced [NADPH--hemoprotein reductase] + O2 = 32-oxoeburicol + oxidized [NADPH--hemoprotein reductase] + 2 H2O + H(+). It catalyses the reaction 32-oxoeburicol + reduced [NADPH--hemoprotein reductase] + O2 = 14-demethyleburicol + formate + oxidized [NADPH--hemoprotein reductase] + H2O + 2 H(+). In terms of biological role, sterol 14-alpha demethylase; part of the gene cluster that mediates the biosynthesis of the tetrahydropyranyl antifungal agent restricticin that acts as an inhibitor of CYP51 and blocks the ergosterol biosynthesis. Sterol 14-alpha-demethylase plays a critical role in the biosynthesis of ergosterol, the major sterol component in fungal membranes that participates in a variety of functions. ResB acts as a self-resistant CYP51 that contains mutations found in CYP51s isolated from azole resistance strains and that is not inhibited by the final product of the cluster, restricticin. This is Sterol 14-alpha demethylase resB from Aspergillus sclerotiorum.